Here is an 82-residue protein sequence, read N- to C-terminus: ATP synthase subunit c, chloroplastic (82 aa).

2 helical membrane-spanning segments follow: residues 4–24 (IISA…AIGP) and 57–77 (LAFM…LLFA).

This sequence belongs to the ATPase C chain family. As to quaternary structure, F-type ATPases have 2 components, F(1) - the catalytic core - and F(0) - the membrane proton channel. F(1) has five subunits: alpha(3), beta(3), gamma(1), delta(1), epsilon(1). F(0) has four main subunits: a(1), b(1), b'(1) and c(10-14). The alpha and beta chains form an alternating ring which encloses part of the gamma chain. F(1) is attached to F(0) by a central stalk formed by the gamma and epsilon chains, while a peripheral stalk is formed by the delta, b and b' chains.

It is found in the plastid. The protein resides in the chloroplast thylakoid membrane. Its function is as follows. F(1)F(0) ATP synthase produces ATP from ADP in the presence of a proton or sodium gradient. F-type ATPases consist of two structural domains, F(1) containing the extramembraneous catalytic core and F(0) containing the membrane proton channel, linked together by a central stalk and a peripheral stalk. During catalysis, ATP synthesis in the catalytic domain of F(1) is coupled via a rotary mechanism of the central stalk subunits to proton translocation. Key component of the F(0) channel; it plays a direct role in translocation across the membrane. A homomeric c-ring of between 10-14 subunits forms the central stalk rotor element with the F(1) delta and epsilon subunits. The chain is ATP synthase subunit c, chloroplastic from Trieres chinensis (Marine centric diatom).